The sequence spans 384 residues: FAD-dependent urate hydroxylase (384 aa).

FAD-binding positions include G11, 30-31 (EA), S43, and V125. Substrate contacts are provided by residues N178, R204, and 216–218 (YFF). FAD contacts are provided by residues D285 and 295–299 (GQGGC).

Belongs to the FAD-dependent urate hydroxylase family. It depends on FAD as a cofactor.

It carries out the reaction urate + NADH + O2 + H(+) = 5-hydroxyisourate + NAD(+) + H2O. The protein operates within purine metabolism; urate degradation. Catalyzes the hydroxylation of uric acid to 5-hydroxyisourate. The sequence is that of FAD-dependent urate hydroxylase (hpxO) from Klebsiella pneumoniae.